A 337-amino-acid polypeptide reads, in one-letter code: Cobalt-precorrin-5B C(1)-methyltransferase (337 aa).

This sequence belongs to the CbiD family.

The enzyme catalyses Co-precorrin-5B + S-adenosyl-L-methionine = Co-precorrin-6A + S-adenosyl-L-homocysteine. It functions in the pathway cofactor biosynthesis; adenosylcobalamin biosynthesis; cob(II)yrinate a,c-diamide from sirohydrochlorin (anaerobic route): step 6/10. Functionally, catalyzes the methylation of C-1 in cobalt-precorrin-5B to form cobalt-precorrin-6A. The polypeptide is Cobalt-precorrin-5B C(1)-methyltransferase (Methanoculleus marisnigri (strain ATCC 35101 / DSM 1498 / JR1)).